Consider the following 826-residue polypeptide: Elongator complex protein 2 (826 aa).

WD repeat units lie at residues 13-53, 56-100, 105-152, 158-200, 205-246, 281-329, 339-378, 386-425, 436-474, 565-609, 612-651, 667-706, 712-753, and 777-826; these read CCPN…VVTN, GHTA…LLKA, GHEG…VMCL, GNGF…FQKV, GHED…TSLE, GHEN…GVWL, GNTL…PREW, GHFD…DQSQ, IHGY…VENF, GHGY…QVQN, FHSL…SPEF, VHSR…DDCI, PCSS…CLYT, and SHTL…KCAL.

Belongs to the WD repeat ELP2 family. As to quaternary structure, component of the elongator complex which consists of ELP1, ELP2, ELP3, ELP4, ELP5 and ELP6. Interacts with STAT3 and JAKs.

Its subcellular location is the cytoplasm. It is found in the nucleus. The protein operates within tRNA modification; 5-methoxycarbonylmethyl-2-thiouridine-tRNA biosynthesis. Its function is as follows. Component of the elongator complex which is required for multiple tRNA modifications, including mcm5U (5-methoxycarbonylmethyl uridine), mcm5s2U (5-methoxycarbonylmethyl-2-thiouridine), and ncm5U (5-carbamoylmethyl uridine). The elongator complex catalyzes the formation of carboxymethyluridine in the wobble base at position 34 in tRNAs. In Homo sapiens (Human), this protein is Elongator complex protein 2 (ELP2).